We begin with the raw amino-acid sequence, 368 residues long: Ubl carboxyl-terminal hydrolase 18 (368 aa).

Positions M31–P48 are mediates interaction with IFNAR2. Positions P48–D109 are mediates interaction with STAT2. Positions V52–T366 constitute a USP domain. Catalysis depends on C61, which acts as the Nucleophile. Residues E299–G308 are mediates interaction with STAT2 and necessary for the negative regulation of the type I IFN signaling pathway. Residues M309–S368 are mediates interaction with IFNAR2. H314 (proton acceptor) is an active-site residue.

This sequence belongs to the peptidase C19 family. In terms of assembly, interacts with STAT2; the interaction is direct. Interacts with IFNAR2; indirectly via STAT2, it negatively regulates the assembly of the ternary interferon-IFNAR1-IFNAR2 complex and inhibits type I interferon signaling. Interacts with STING1. Interacts with USP20.

The catalysed reaction is Thiol-dependent hydrolysis of ester, thioester, amide, peptide and isopeptide bonds formed by the C-terminal Gly of ubiquitin (a 76-residue protein attached to proteins as an intracellular targeting signal).. In terms of biological role, interferon-induced ISG15-specific protease that plays a crucial role for maintaining a proper balance of ISG15-conjugated proteins in cells. Regulates protein ISGylation by efficiently cleaving ISG15 conjugates linked via isopeptide bonds. Regulates T-cell activation and T-helper 17 (Th17) cell differentiation by deubiquitinating TAK1, likely to keep TAK1-TAB complexes in steady conditions. In turn, restricts activation of NF-kappa-B, NFAT, and JNK as well as expression of IL2 in T-cells after TCR activation. Acts as a molecular adapter with USP20 to promote innate antiviral response through deubiquitinating STING1. Involved also in the negative regulation of the inflammatory response triggered by type I interferon. Upon recruitment by STAT2 to the type I interferon receptor subunit IFNAR2 interferes with the assembly of the ternary interferon-IFNAR1-IFNAR2 complex and acts as a negative regulator of the type I interferon signaling pathway. This chain is Ubl carboxyl-terminal hydrolase 18 (Usp18), found in Mus musculus (Mouse).